Here is a 275-residue protein sequence, read N- to C-terminus: MGIRLYRAYTPGTRFRSVSEFTDITRSKPEKSLTYGRHRSQGRNNRGIITSRHRGGGHKRLSREIDFRRDKVGIPARVATIEYDPNRNCRIALLNYQDGEKRYVLHPRGLMVGEEIIAGPDAPLQLGNALPLSKIPLGTGIHNIEVSPGQGGKLVRAAGGVAQLVAKEGSYVTVRLPSGEVRLVLKECSATIGQVGNVDASNVTIGKAGRKRWLGQRPKVRGVVMNPVDHPHGGGEGRAPIGRSKPVTPWGHPALGKRTRKRNKYSNALIIRRRK.

Disordered stretches follow at residues 29 to 60 and 225 to 252; these read PEKS…GHKR and MNPV…PWGH. Over residues 51 to 60 the composition is skewed to basic residues; that stretch reads SRHRGGGHKR.

Belongs to the universal ribosomal protein uL2 family. In terms of assembly, part of the 50S ribosomal subunit.

The protein resides in the plastid. It is found in the chloroplast. This chain is Large ribosomal subunit protein uL2c (rpl2), found in Chlorokybus atmophyticus (Soil alga).